Reading from the N-terminus, the 59-residue chain is U-myrmeciitoxin(01)-Mg5a (59 aa).

A signal peptide spans methionine 1–alanine 21. Residues serine 22–glycine 38 constitute a propeptide that is removed on maturation.

In terms of tissue distribution, expressed by the venom gland.

It is found in the secreted. In terms of biological role, may have antimicrobial properties, like most ant linear peptides. In Myrmecia gulosa (Red bulldog ant), this protein is U-myrmeciitoxin(01)-Mg5a.